Consider the following 129-residue polypeptide: UPF0102 protein Mrad2831_2938 (129 aa).

It belongs to the UPF0102 family.

The sequence is that of UPF0102 protein Mrad2831_2938 from Methylobacterium radiotolerans (strain ATCC 27329 / DSM 1819 / JCM 2831 / NBRC 15690 / NCIMB 10815 / 0-1).